Here is a 380-residue protein sequence, read N- to C-terminus: Protein phosphatase methylesterase 1 (380 aa).

The disordered stretch occupies residues 1–38; it reads MSALEKSMHLGRLPSRPPLPGSGGSQSGAKMRMGPGRK. Serine 15 is modified (phosphoserine). An Asymmetric dimethylarginine; alternate modification is found at arginine 16. The residue at position 16 (arginine 16) is an Omega-N-methylarginine; alternate. Serine 42 bears the Phosphoserine mark. Catalysis depends on residues serine 156 and aspartate 181. Residues 255–265 are compositionally biased toward acidic residues; sequence IEEEEEDEEGS. Residues 255–280 form a disordered region; it reads IEEEEEDEEGSESVNKRKKEDDMETK. Over residues 268–280 the composition is skewed to basic and acidic residues; that stretch reads VNKRKKEDDMETK. Histidine 349 is a catalytic residue.

This sequence belongs to the AB hydrolase superfamily. Binds PPP2CA and PPP2CB. In terms of processing, phosphorylated by SIK1 following increases in intracellular sodium, leading to dissociation from the protein phosphatase 2A (PP2A) complex and subsequent dephosphorylation of sodium/potassium-transporting ATPase ATP1A1.

The enzyme catalyses [phosphatase 2A protein]-C-terminal L-leucine methyl ester + H2O = [phosphatase 2A protein]-C-terminal L-leucine + methanol + H(+). In terms of biological role, demethylates proteins that have been reversibly carboxymethylated. Demethylates PPP2CB (in vitro) and PPP2CA. Binding to PPP2CA displaces the manganese ion and inactivates the enzyme. This Bos taurus (Bovine) protein is Protein phosphatase methylesterase 1 (PPME1).